A 249-amino-acid polypeptide reads, in one-letter code: MILELDCGNSFIKWRITTKSDAAVVSVGVVDSDAALLEHLRNLSDTTFSDCRLVSVRSAEETARLVSVLTNAFSVTPVCAVPARELGGVVNGYDDFERLGLDRWLAFVGAYHLVKRACLVIDLGTAVTSDFVDAGGAHLGGFICPGMPLMRNQLRTHTRRIRYDDTEAERALVRLVPGRATAEAVERGCSLMLRGFALTQVEIARGYWGDDFAIFVTGGDAALVADVLPGARIVPDLVFVGLALACPLR.

6–13 is a binding site for ATP; the sequence is DCGNSFIK. Residues Y93 and 100–103 contribute to the substrate site; that span reads GLDR. D102 functions as the Proton acceptor in the catalytic mechanism. D122 contributes to the K(+) binding site. Residue T125 participates in ATP binding. T181 serves as a coordination point for substrate.

It belongs to the type III pantothenate kinase family. As to quaternary structure, homodimer. The cofactor is NH4(+). K(+) serves as cofactor.

The protein resides in the cytoplasm. The catalysed reaction is (R)-pantothenate + ATP = (R)-4'-phosphopantothenate + ADP + H(+). It participates in cofactor biosynthesis; coenzyme A biosynthesis; CoA from (R)-pantothenate: step 1/5. Functionally, catalyzes the phosphorylation of pantothenate (Pan), the first step in CoA biosynthesis. The chain is Type III pantothenate kinase from Pseudomonas syringae pv. syringae (strain B728a).